The chain runs to 191 residues: 3-isopropylmalate dehydratase small subunit (191 aa).

Belongs to the LeuD family. LeuD type 1 subfamily. Heterodimer of LeuC and LeuD.

The catalysed reaction is (2R,3S)-3-isopropylmalate = (2S)-2-isopropylmalate. Its pathway is amino-acid biosynthesis; L-leucine biosynthesis; L-leucine from 3-methyl-2-oxobutanoate: step 2/4. In terms of biological role, catalyzes the isomerization between 2-isopropylmalate and 3-isopropylmalate, via the formation of 2-isopropylmaleate. The chain is 3-isopropylmalate dehydratase small subunit from Anaeromyxobacter dehalogenans (strain 2CP-C).